Consider the following 527-residue polypeptide: tRNA pseudouridine synthase Pus10 (527 aa).

The Zn(2+) site is built by C21 and C24. The stretch at 42 to 87 forms a coiled coil; it reads KELLNELQKFLEPEKPELILEAPNPPLKKIRLHEDGIDNLSEDGKE. S82 bears the Phosphoserine mark. Zn(2+) is bound by residues C107 and C110. Positions 302–315 are RNA binding forefinger loop; the sequence is TPWIIDGERKMESS. D342 functions as the Nucleophile in the catalytic mechanism. The interval 440–455 is RNA binding thumb loop; sequence QKTPLRVLHRRPLAVR.

Belongs to the pseudouridine synthase Pus10 family. As to quaternary structure, interacts with components of the microprocessor complex DROSHA and DGCR8. In terms of processing, proteolytically cleaved during TRAIL-induced cell death. Cleaved, in vitro, either by caspase-3 (CASP3) or caspase-8 (CASP8).

Its subcellular location is the nucleus. It localises to the cytoplasm. It is found in the mitochondrion. The enzyme catalyses uridine(55) in tRNA = pseudouridine(55) in tRNA. The catalysed reaction is uridine(54) in tRNA = pseudouridine(54) in tRNA. Its function is as follows. Protein with different functions depending on its subcellular location: involved in miRNA processing in the nucleus and acts as a tRNA pseudouridylate synthase in the cytoplasm. In the cytoplasm, acts as a pseudouridylate synthase by catalyzing synthesis of pseudouridine(54) and pseudouridine(55) from uracil-54 and uracil-55, respectively, in the psi GC loop of a subset of tRNAs. tRNA pseudouridylate synthase activity is enhanced by the presence of 1-methyladenosine at position 53-61 of tRNAs. Does not show tRNA pseudouridylate synthase activity in the nucleus. In the nucleus, promotes primary microRNAs (pri-miRNAs) processing independently of its RNA pseudouridylate synthase activity. Binds pri-miRNAs. Modulator of TRAIL/TNFSF10-induced cell death via activation of procaspase-8 and BID cleavage. Required for the progression of the apoptotic signal through intrinsic mitochondrial cell death. The polypeptide is tRNA pseudouridine synthase Pus10 (Mus musculus (Mouse)).